Here is a 231-residue protein sequence, read N- to C-terminus: Large ribosomal subunit protein uL1 (231 aa).

The protein belongs to the universal ribosomal protein uL1 family. In terms of assembly, part of the 50S ribosomal subunit.

In terms of biological role, binds directly to 23S rRNA. The L1 stalk is quite mobile in the ribosome, and is involved in E site tRNA release. Protein L1 is also a translational repressor protein, it controls the translation of the L11 operon by binding to its mRNA. The protein is Large ribosomal subunit protein uL1 of Acinetobacter baumannii (strain AB307-0294).